A 269-amino-acid polypeptide reads, in one-letter code: uncharacterized protein (269 aa).

The stretch at 3 to 66 (VDQAAIDEIL…QNLQNLAEGA (64 aa)) forms a coiled coil. The segment at 83 to 142 (AQIPEPPKPEPEVEQPETETGPEPEPEAEPELKEVKEDEPPEEDVVRELDESKSAEPIPE) is disordered. Residues 94-111 (EVEQPETETGPEPEPEAE) show a composition bias toward acidic residues. Residues 112–136 (PELKEVKEDEPPEEDVVRELDESKS) show a composition bias toward basic and acidic residues.

This is an uncharacterized protein from Archaeoglobus fulgidus (strain ATCC 49558 / DSM 4304 / JCM 9628 / NBRC 100126 / VC-16).